We begin with the raw amino-acid sequence, 309 residues long: Cytochrome c biogenesis protein CcsA (309 aa).

8 helical membrane-spanning segments follow: residues 18–38 (LGLLVFYFLLINLPISLGAVF), 43–63 (SFAVRLITILVNLLITLQLLF), 73–93 (ISNLYESLYFLAWGITLGQLL), 102–122 (IIPSIAIPIELLIVSFACFVL), 148–168 (VMLSYAALIIGSLLSMSVLFI), 216–236 (SILIGFVLLTLGLISGAVWAN), 250–267 (TWAFISWLFYAAYLHMRI), and 279–299 (LASTGFLVVLVCYLGVNFLGI).

The protein belongs to the CcmF/CycK/Ccl1/NrfE/CcsA family. In terms of assembly, may interact with ccs1.

Its subcellular location is the cellular thylakoid membrane. Its function is as follows. Required during biogenesis of c-type cytochromes (cytochrome c6 and cytochrome f) at the step of heme attachment. This chain is Cytochrome c biogenesis protein CcsA, found in Prochlorococcus marinus (strain MIT 9301).